A 325-amino-acid chain; its full sequence is D site-binding protein (325 aa).

Disordered stretches follow at residues 1-100 (MARP…PGLL), 124-198 (LEHG…DPDT), and 212-255 (LALS…EQKD). The span at 17 to 28 (GPTGAPPGGGAL) shows a compositional bias: gly residues. Low complexity-rich tracts occupy residues 29–38 (LGLRSLLQGT) and 71–80 (AGPADASAGA). Phosphoserine is present on serine 86. Low complexity predominate over residues 88–100 (RGRPGAAPGPGLL). Residues 129-153 (PPSPPPPGGPSPAPSPVRTPAPSPR) are compositionally biased toward pro residues. Low complexity predominate over residues 166–176 (PGHAPARAALG). Over residues 221 to 236 (ETFDPRRHRFSEEELK) the composition is skewed to basic and acidic residues. Residues 255–318 (DEKYWSRRYK…SHYRAVLSRY (64 aa)) enclose the bZIP domain. The interval 257–279 (KYWSRRYKNNEAAKRSRDARRLK) is basic motif. Residues 283–297 (ISVRAAFLEKENALL) are leucine-zipper.

The protein belongs to the bZIP family. PAR subfamily. In terms of assembly, binds DNA as a homodimer or a heterodimer. Can form a heterodimer with TEF.

It localises to the nucleus. Its function is as follows. This transcriptional activator recognizes and binds to the sequence 5'-RTTAYGTAAY-3' found in the promoter of genes such as albumin, CYP2A4 and CYP2A5. It is not essential for circadian rhythm generation, but modulates important clock output genes. May be a direct target for regulation by the circadian pacemaker component clock. May affect circadian period and sleep regulation. The sequence is that of D site-binding protein (DBP) from Bos taurus (Bovine).